The chain runs to 1093 residues: Probable cellulose synthase A catalytic subunit 3 [UDP-forming] (1093 aa).

Residues 1 to 280 lie on the Cytoplasmic side of the membrane; it reads MEASAGLVAG…PSSQINPYRM (280 aa). Zn(2+)-binding residues include cysteine 39, cysteine 42, cysteine 58, cysteine 61, cysteine 66, cysteine 69, cysteine 81, and cysteine 84. An RING-type; degenerate zinc finger spans residues 39 to 85; it reads CQICGDDVGLNPDGEPFVACNECAFPVCRDCYEYERREGTQNCPQCK. A compositionally biased stretch (basic and acidic residues) spans 233–246; that stretch reads LHQMRNDGGGKDWD. Residues 233 to 257 form a disordered region; sequence LHQMRNDGGGKDWDGDGDDGDLPLM. The chain crosses the membrane as a helical span at residues 281–301; that stretch reads VIIIRLVVLGFFFHYRVMHPV. The Extracellular segment spans residues 302–303; sequence PD. The chain crosses the membrane as a helical span at residues 304–324; that stretch reads AFALWLISVICEIWFAMSWIL. Over 325-869 the chain is Cytoplasmic; it reads DQFPKWFPIE…CLERFSYINS (545 aa). UDP-alpha-D-glucose contacts are provided by serine 363, lysine 369, glutamate 370, and aspartate 399. Aspartate 399 is an active-site residue. Residues 453–480 are a coiled coil; it reads VRERRAMKREYEEFKVRINALVAKAQKV. Lysine 540 lines the UDP-alpha-D-glucose pocket. The Mn(2+) site is built by lysine 541 and aspartate 565. Aspartate 793 is an active-site residue. Residues 870–890 form a helical membrane-spanning segment; the sequence is IVYPFTSIPLLAYCTLPAICL. The Extracellular portion of the chain corresponds to 891–902; sequence LTGKFITPELTN. A helical membrane pass occupies residues 903–923; that stretch reads VASLWFMSLFICIFATGILEM. At 924–939 the chain is on the cytoplasmic side; that stretch reads RWSGVGIDDWWRNEQF. Residues 940 to 960 form a helical membrane-spanning segment; the sequence is WVIGGVSSHLFALFQGLLKVI. At 961–988 the chain is on the extracellular side; the sequence is AGIDTSFTVTSKGGDDEEFSELYTFKWT. Residues 989–1009 traverse the membrane as a helical segment; that stretch reads TLLIPPTTLLLLNFIGVVAGV. Topologically, residues 1010–1020 are cytoplasmic; sequence SNAINNGYESW. The chain crosses the membrane as a helical span at residues 1021 to 1041; the sequence is GPLFGKLFFAFWVIVHLYPFL. Topologically, residues 1042–1050 are extracellular; it reads KGLVGRQNR. The chain crosses the membrane as a helical span at residues 1051–1071; that stretch reads TPTIVIVWSILLASIFSLLWV. The Cytoplasmic segment spans residues 1072 to 1093; the sequence is RIDPFLAKNDGPLLEECGLDCN.

This sequence belongs to the glycosyltransferase 2 family. Plant cellulose synthase subfamily. Mn(2+) is required as a cofactor. The cofactor is Zn(2+).

The protein localises to the cell membrane. The enzyme catalyses [(1-&gt;4)-beta-D-glucosyl](n) + UDP-alpha-D-glucose = [(1-&gt;4)-beta-D-glucosyl](n+1) + UDP + H(+). The protein operates within glycan metabolism; plant cellulose biosynthesis. In terms of biological role, probable catalytic subunit of cellulose synthase terminal complexes ('rosettes'), required for beta-1,4-glucan microfibril crystallization, a major mechanism of the cell wall formation. This is Probable cellulose synthase A catalytic subunit 3 [UDP-forming] (CESA3) from Oryza sativa subsp. japonica (Rice).